Consider the following 129-residue polypeptide: SPbeta prophage-derived protein NrdI (129 aa).

This sequence belongs to the NrdI family.

Its function is as follows. Probably involved in ribonucleotide reductase function. This Bacillus subtilis (strain 168) protein is SPbeta prophage-derived protein NrdI (nrdIB).